Consider the following 513-residue polypeptide: 2,3-bisphosphoglycerate-independent phosphoglycerate mutase (513 aa).

Asp-13 and Ser-63 together coordinate Mn(2+). Ser-63 functions as the Phosphoserine intermediate in the catalytic mechanism. Substrate contacts are provided by residues His-124, 154–155 (RD), Arg-186, Arg-192, 262–265 (RADR), and Lys-335. Residues Asp-402, His-406, Asp-443, His-444, and His-462 each contribute to the Mn(2+) site.

It belongs to the BPG-independent phosphoglycerate mutase family. Monomer. Mn(2+) serves as cofactor.

It carries out the reaction (2R)-2-phosphoglycerate = (2R)-3-phosphoglycerate. The protein operates within carbohydrate degradation; glycolysis; pyruvate from D-glyceraldehyde 3-phosphate: step 3/5. Catalyzes the interconversion of 2-phosphoglycerate and 3-phosphoglycerate. This Shewanella amazonensis (strain ATCC BAA-1098 / SB2B) protein is 2,3-bisphosphoglycerate-independent phosphoglycerate mutase.